A 381-amino-acid chain; its full sequence is MSNRTIFEEVSSDSKQQSSPTPGGIDRKRRGARGAIRVWLAVLFALVVAMIAVGGLTRLTDSGLSITEWRPVTGAVPPMSEAEWQAEFEKYKQIDQYHLMNTWMELSDFKTIYWWEWGHRQLGRVIGLIWALGFFGFLVTRSIPTGWTGRLLLPGILGGVQGAIGWWMVASGVTLGEGMTSVASYRLATHLGLAFVILGFLAWYMFLLGREERDLMQARRLKEEKLFGMSTGLLHFAFLQILLGALVAGIDAGRSYTDWPLMGGQIFPPRPFMIEPLWKNFFENPGLVQFIHRVAGYLLFAFAVVVWLRGRRSAHKATQFAFNAVFAALSLQLVIGIVTVMTAAPVEIAIVHQAVAVLVWVLILRARFLSAYPVATSIKGH.

The interval 1-28 is disordered; sequence MSNRTIFEEVSSDSKQQSSPTPGGIDRK. 8 helical membrane passes run 36-56, 125-145, 151-171, 187-207, 230-250, 287-307, 320-340, and 344-364; these read IRVW…VGGL, VIGL…SIPT, LLLP…MVAS, LATH…YMFL, STGL…VAGI, LVQF…VVVW, FAFN…IVTV, and APVE…VLIL. His-292 serves as a coordination point for heme. His-352 lines the heme pocket.

Belongs to the COX15/CtaA family. Type 2 subfamily. Interacts with CtaB. Requires heme b as cofactor.

It is found in the cell membrane. The enzyme catalyses Fe(II)-heme o + 2 A + H2O = Fe(II)-heme a + 2 AH2. It participates in porphyrin-containing compound metabolism; heme A biosynthesis; heme A from heme O: step 1/1. Its function is as follows. Catalyzes the conversion of heme O to heme A by two successive hydroxylations of the methyl group at C8. The first hydroxylation forms heme I, the second hydroxylation results in an unstable dihydroxymethyl group, which spontaneously dehydrates, resulting in the formyl group of heme A. In Ruegeria sp. (strain TM1040) (Silicibacter sp.), this protein is Heme A synthase.